Here is a 251-residue protein sequence, read N- to C-terminus: Tyrosine phosphatase-like protein J3 (251 aa).

The Tyrosine-protein phosphatase domain maps to 26 to 251 (IADEYYTIVP…PVLQNSKRRE (226 aa)).

This sequence belongs to the protein-tyrosine phosphatase family.

The protein is Tyrosine phosphatase-like protein J3 (J4) of Microplitis demolitor (Parasitoid wasp).